Here is a 199-residue protein sequence, read N- to C-terminus: UPF0301 protein Anae109_0457 (199 aa).

This sequence belongs to the UPF0301 (AlgH) family.

This Anaeromyxobacter sp. (strain Fw109-5) protein is UPF0301 protein Anae109_0457.